A 439-amino-acid polypeptide reads, in one-letter code: Gnt-II system L-idonate transporter (439 aa).

The Periplasmic portion of the chain corresponds to 1 to 11; it reads MPLIIIAAGVA. The chain crosses the membrane as a helical span at residues 12-34; that stretch reads LLLILMIGFKVNGFIALVLVAAV. Over 35 to 53 the chain is Cytoplasmic; it reads VGFAEGMDAQAVLHSIQNG. The chain crosses the membrane as a helical span at residues 54–76; it reads IGSTLGGLAMILGFGAMLGKLIS. Over 77 to 96 the chain is Periplasmic; that stretch reads DTGAAQRIATTLIATFGKKR. Residues 97–114 traverse the membrane as a helical segment; sequence VQWALVITGLVVGLAMFF. Residues 115-118 lie on the Cytoplasmic side of the membrane; that stretch reads EVGF. Residues 119-141 form a helical membrane-spanning segment; it reads VLLLPLVFTIVASSGLPLLYVGV. Residues 142 to 170 lie on the Periplasmic side of the membrane; that stretch reads PMVAALSVTHCFLPPHPGPTAIATIFEAN. A helical membrane pass occupies residues 171 to 193; the sequence is LGTTLLYGFIITIPTVIVAGPLF. Residues 194-218 are Cytoplasmic-facing; sequence SKLLTRFEKAPPEGLFNPHLFSEEE. The helical transmembrane segment at 219–241 threads the bilayer; it reads MPSFWNSIFAAVIPVILMAIAAV. The Periplasmic portion of the chain corresponds to 242–253; sequence CEITLPKTNTVR. A helical membrane pass occupies residues 254 to 276; sequence LFFEFVGNPAVALFIAIVIAIFT. The Cytoplasmic segment spans residues 277-290; it reads LGRRNGRTIEQIMD. A helical transmembrane segment spans residues 291–310; that stretch reads IIGDSIGAIAMIVFIIAGGG. At 311–322 the chain is on the periplasmic side; sequence AFKQVLVDSGVG. Residues 323 to 345 form a helical membrane-spanning segment; the sequence is HYISHLMTGTTLSPLLMCWTVAA. The Cytoplasmic segment spans residues 346-348; the sequence is LLR. A helical transmembrane segment spans residues 349–371; sequence IALGSATVAAITTAGVVLPIINV. Over 372–377 the chain is Periplasmic; the sequence is THADPA. Residues 378 to 400 traverse the membrane as a helical segment; sequence LMVLATGAGSVIASHVNDPGFWL. Residues 401–414 lie on the Cytoplasmic side of the membrane; the sequence is FKGYFNLTVGETLR. A helical membrane pass occupies residues 415 to 437; that stretch reads TWTVMETLISIMGLLGVLAINAV. Over 438-439 the chain is Periplasmic; sequence LH.

This sequence belongs to the GntP permease family.

The protein localises to the cell inner membrane. The catalysed reaction is L-idonate(in) + H(+)(in) = L-idonate(out) + H(+)(out). It catalyses the reaction D-gluconate(in) + H(+)(in) = D-gluconate(out) + H(+)(out). It carries out the reaction 5-dehydro-D-gluconate(in) + H(+)(in) = 5-dehydro-D-gluconate(out) + H(+)(out). It functions in the pathway carbohydrate acid metabolism; L-idonate degradation. In terms of biological role, transporter which is probably involved in L-idonate metabolism. Transports L-idonate from the periplasm across the inner membrane. Can also transport D-gluconate and 5-keto-D-gluconate. It has been reported that gluconate uptake probably occurs via a proton-symport mechanism in E.coli. The polypeptide is Gnt-II system L-idonate transporter (Escherichia coli (strain K12)).